The following is a 548-amino-acid chain: Membrane protein insertase YidC (548 aa).

The helical transmembrane segment at Asn6–Asp26 threads the bilayer. Residues Asn28 to Ala54 form a disordered region. Residues Pro29–Thr42 show a composition bias toward low complexity. The next 4 helical transmembrane spans lie at Phe350–Tyr370, Phe424–Ile444, Leu458–Ile478, and Pro499–Val519.

This sequence belongs to the OXA1/ALB3/YidC family. Type 1 subfamily. Interacts with the Sec translocase complex via SecD. Specifically interacts with transmembrane segments of nascent integral membrane proteins during membrane integration.

The protein localises to the cell inner membrane. Required for the insertion and/or proper folding and/or complex formation of integral membrane proteins into the membrane. Involved in integration of membrane proteins that insert both dependently and independently of the Sec translocase complex, as well as at least some lipoproteins. Aids folding of multispanning membrane proteins. This chain is Membrane protein insertase YidC, found in Citrobacter koseri (strain ATCC BAA-895 / CDC 4225-83 / SGSC4696).